Reading from the N-terminus, the 277-residue chain is Putative phosphoenolpyruvate synthase regulatory protein (277 aa).

ADP is bound at residue 157–164; that stretch reads GVSRCGKT.

The protein belongs to the pyruvate, phosphate/water dikinase regulatory protein family. PSRP subfamily.

It carries out the reaction [pyruvate, water dikinase] + ADP = [pyruvate, water dikinase]-phosphate + AMP + H(+). It catalyses the reaction [pyruvate, water dikinase]-phosphate + phosphate + H(+) = [pyruvate, water dikinase] + diphosphate. Its function is as follows. Bifunctional serine/threonine kinase and phosphorylase involved in the regulation of the phosphoenolpyruvate synthase (PEPS) by catalyzing its phosphorylation/dephosphorylation. The protein is Putative phosphoenolpyruvate synthase regulatory protein of Klebsiella pneumoniae subsp. pneumoniae (strain ATCC 700721 / MGH 78578).